The chain runs to 892 residues: Translation initiation factor IF-2 (892 aa).

The tract at residues 65–296 (KTRSTLNIPS…KGKRKPSTLQ (232 aa)) is disordered. A compositionally biased stretch (polar residues) spans 68–82 (STLNIPSTGGKSKSV). The span at 99 to 217 (EQAKAEEQAQ…KMAAENEGKW (119 aa)) shows a compositional bias: basic and acidic residues. Positions 224–237 (QTESADYHVTTSQH) are enriched in polar residues. Over residues 239-254 (RAAEDENDAKVEGDRR) the composition is skewed to basic and acidic residues. The segment covering 255–269 (SRTRGGKATKQKKGN) has biased composition (basic residues). Residues 270-283 (KLSESKADREEARA) are compositionally biased toward basic and acidic residues. Residues 391 to 560 (HRAPVVTIMG…LLQAEVLELK (170 aa)) enclose the tr-type G domain. The interval 400 to 407 (GHVDHGKT) is G1. A GTP-binding site is contributed by 400–407 (GHVDHGKT). The tract at residues 425-429 (GITQH) is G2. Residues 446–449 (DTPG) form a G3 region. Residues 446-450 (DTPGH) and 500-503 (NKID) each bind GTP. The tract at residues 500–503 (NKID) is G4. Positions 536–538 (SAK) are G5.

The protein belongs to the TRAFAC class translation factor GTPase superfamily. Classic translation factor GTPase family. IF-2 subfamily.

The protein resides in the cytoplasm. One of the essential components for the initiation of protein synthesis. Protects formylmethionyl-tRNA from spontaneous hydrolysis and promotes its binding to the 30S ribosomal subunits. Also involved in the hydrolysis of GTP during the formation of the 70S ribosomal complex. In Yersinia pseudotuberculosis serotype O:1b (strain IP 31758), this protein is Translation initiation factor IF-2.